A 262-amino-acid chain; its full sequence is Type III pantothenate kinase (262 aa).

Residue 6-13 (DVGNTNAV) participates in ATP binding. Substrate-binding positions include Tyr-100 and 107–110 (GADR). Asp-109 serves as the catalytic Proton acceptor. K(+) is bound at residue Asp-129. Thr-132 contacts ATP. Residue Thr-184 participates in substrate binding.

The protein belongs to the type III pantothenate kinase family. In terms of assembly, homodimer. Requires NH4(+) as cofactor. K(+) serves as cofactor.

It is found in the cytoplasm. The catalysed reaction is (R)-pantothenate + ATP = (R)-4'-phosphopantothenate + ADP + H(+). It functions in the pathway cofactor biosynthesis; coenzyme A biosynthesis; CoA from (R)-pantothenate: step 1/5. In terms of biological role, catalyzes the phosphorylation of pantothenate (Pan), the first step in CoA biosynthesis. The protein is Type III pantothenate kinase of Bacillus cereus (strain G9842).